Reading from the N-terminus, the 1320-residue chain is Clustered mitochondria protein homolog (1320 aa).

3 disordered regions span residues 166–241 (QQLE…KQKM), 552–582 (YGSM…TKSI), and 683–708 (LKEK…EDVQ). Positions 185-194 (TEDKEEKETI) are enriched in basic and acidic residues. The span at 202–213 (KKNKHHNKKGNK) shows a compositional bias: basic residues. Basic and acidic residues-rich tracts occupy residues 226-241 (NEEK…KQKM), 565-575 (QQQKEENEENK), and 683-695 (LKEK…KEGI). The region spanning 379-649 (KTNRYDINKG…KATPRDPNYT (271 aa)) is the Clu domain. 5 TPR repeats span residues 955-988 (GLDL…YHQV), 997-1030 (GACF…TEKT), 1039-1072 (VQAY…TDLL), 1081-1114 (ASIY…QEFL), and 1123-1156 (STTY…LEKE). A disordered region spans residues 1204 to 1320 (KADQFKKSQP…SKPNKKSSKN (117 aa)). Positions 1237–1247 (KPKKSQSKKSK) are enriched in basic residues. Low complexity predominate over residues 1248 to 1311 (STNTTTTTNT…PTSSSAADSS (64 aa)).

Belongs to the CLU family.

It localises to the cytoplasm. MRNA-binding protein involved in proper cytoplasmic distribution of mitochondria. The polypeptide is Clustered mitochondria protein homolog (Dictyostelium discoideum (Social amoeba)).